The chain runs to 361 residues: L-threonine 3-dehydrogenase (361 aa).

Residue C38 participates in Zn(2+) binding. Catalysis depends on charge relay system residues T40 and H43. Zn(2+) is bound by residues H63, E64, C93, C96, C99, and C107. Residues I175, D195, R200, 262–264 (LGI), and 286–287 (IY) contribute to the NAD(+) site.

This sequence belongs to the zinc-containing alcohol dehydrogenase family. In terms of assembly, homotetramer. Requires Zn(2+) as cofactor.

The protein localises to the cytoplasm. It carries out the reaction L-threonine + NAD(+) = (2S)-2-amino-3-oxobutanoate + NADH + H(+). The protein operates within amino-acid degradation; L-threonine degradation via oxydo-reductase pathway; glycine from L-threonine: step 1/2. Its function is as follows. Catalyzes the NAD(+)-dependent oxidation of L-threonine to 2-amino-3-ketobutyrate. This is L-threonine 3-dehydrogenase from Pectobacterium atrosepticum (strain SCRI 1043 / ATCC BAA-672) (Erwinia carotovora subsp. atroseptica).